The following is a 197-amino-acid chain: MADQRQRSLSTSGESLYHVLGLDKNATTDDIKKCYRKLALKYHPDKNPDNPEASEKFKEINNAHGILADSTKRNIYDKYGSLGLYVAEQFGEENVNTYFVLSSWWAKALFMFCGLITGCYCCCCLCCCCNCCCGKCKPRPPEGEDQDIYVSPEDLEAQMQSDERDTEGPVLVQPASATETTQLTSDSHASYHTDGFN.

One can recognise a J domain in the interval 13–82; sequence GESLYHVLGL…RNIYDKYGSL (70 aa). The tract at residues 153–197 is disordered; the sequence is EDLEAQMQSDERDTEGPVLVQPASATETTQLTSDSHASYHTDGFN. The span at 175-197 shows a compositional bias: polar residues; that stretch reads ASATETTQLTSDSHASYHTDGFN.

Post-translationally, palmitoylated. Palmitoylation occurs probably in the cysteine-rich domain and regulates DNAJC5 stable membrane attachment.

Its subcellular location is the cytoplasm. The protein localises to the cytosol. The protein resides in the membrane. It localises to the cytoplasmic vesicle. It is found in the secretory vesicle. Its subcellular location is the chromaffin granule membrane. The protein localises to the melanosome. The protein resides in the cell membrane. In terms of biological role, may have an important role in presynaptic function. May be involved in calcium-dependent neurotransmitter release at nerve endings. In Xenopus laevis (African clawed frog), this protein is DnaJ homolog subfamily C member 5.